A 313-amino-acid chain; its full sequence is Putative zinc finger protein 077L (313 aa).

A C3H1-type zinc finger spans residues 174–199 (CFSITKGIECPHYSCTYIHNYSQIEH). Positions 294 to 313 (SDDSDSENNDEDDDWKIDLF) are disordered. Residues 296–313 (DSDSENNDEDDDWKIDLF) show a composition bias toward acidic residues.

This sequence belongs to the IIV-6 077L family.

The polypeptide is Putative zinc finger protein 077L (Invertebrate iridescent virus 6 (IIV-6)).